The primary structure comprises 225 residues: Putative amino-acid transporter YggA (225 aa).

5 helical membrane-spanning segments follow: residues 1 to 21, 37 to 57, 65 to 85, 116 to 136, and 150 to 170; these read MFAT…PIGA, LLTA…GVFG, SPIG…WFGI, LGVT…LGSF, and AVAM…AVVL.

It belongs to the LysE/ArgO transporter (TC 2.A.75) family.

It is found in the cell membrane. This chain is Putative amino-acid transporter YggA, found in Aeromonas hydrophila.